A 390-amino-acid polypeptide reads, in one-letter code: EF-hand calcium-binding domain-containing protein 4A (390 aa).

Positions 1–27 (MSPRSTLRSPLPSRTARSSASSDTPSP) are enriched in low complexity. The disordered stretch occupies residues 1 to 37 (MSPRSTLRSPLPSRTARSSASSDTPSPGADRQDRMSK). 2 EF-hand domains span residues 33–66 (DRMSKAKELFVLCDKEGKGFITKRDMQRLQQELP) and 67–102 (LSPEQLESVFESLDRDRNGYLTPLEFHTGLGELVGS). Ca(2+)-binding residues include aspartate 80, aspartate 82, asparagine 84, tyrosine 86, and glutamate 91. Residues 173–357 (SHLQDALKEK…DDKDAHQAQK (185 aa)) are a coiled coil. The interval 206–234 (DMESQLKEERERRQALDSMRQGDKKEQLL) is disordered.

This sequence belongs to the EFCAB4 family.

This chain is EF-hand calcium-binding domain-containing protein 4A (cracr2b), found in Danio rerio (Zebrafish).